Reading from the N-terminus, the 192-residue chain is NADH-quinone oxidoreductase subunit B 1 (192 aa).

[4Fe-4S] cluster-binding residues include Cys71, Cys72, Cys136, and Cys166.

It belongs to the complex I 20 kDa subunit family. In terms of assembly, NDH-1 is composed of 14 different subunits. Subunits NuoB, C, D, E, F, and G constitute the peripheral sector of the complex. [4Fe-4S] cluster is required as a cofactor.

It localises to the cell inner membrane. It catalyses the reaction a quinone + NADH + 5 H(+)(in) = a quinol + NAD(+) + 4 H(+)(out). NDH-1 shuttles electrons from NADH, via FMN and iron-sulfur (Fe-S) centers, to quinones in the respiratory chain. The immediate electron acceptor for the enzyme in this species is believed to be ubiquinone. Couples the redox reaction to proton translocation (for every two electrons transferred, four hydrogen ions are translocated across the cytoplasmic membrane), and thus conserves the redox energy in a proton gradient. In Rhizobium meliloti (strain 1021) (Ensifer meliloti), this protein is NADH-quinone oxidoreductase subunit B 1.